A 514-amino-acid chain; its full sequence is Nucleus accumbens-associated protein 1 (514 aa).

In terms of domain architecture, BTB spans 30–94 (CDVSVVVKGH…CYTGRLSMNM (65 aa)). K167 is covalently cross-linked (Glycyl lysine isopeptide (Lys-Gly) (interchain with G-Cter in SUMO1); alternate). K167 is covalently cross-linked (Glycyl lysine isopeptide (Lys-Gly) (interchain with G-Cter in SUMO2); alternate). K182 participates in a covalent cross-link: Glycyl lysine isopeptide (Lys-Gly) (interchain with G-Cter in SUMO2). Disordered regions lie at residues 183 to 205 (RLWD…RKMA) and 242 to 279 (PSMS…EEGT). S187 is modified (phosphoserine). Residues 242 to 251 (PSMSERTSPG) show a composition bias toward polar residues. S245 carries the post-translational modification Phosphoserine; by PKC. The segment covering 252–264 (TSSAYTSDSPSSY) has biased composition (low complexity). The segment covering 267–279 (EEDEEEDAGEEGT) has biased composition (acidic residues). Residues K304, K438, K466, and K485 each participate in a glycyl lysine isopeptide (Lys-Gly) (interchain with G-Cter in SUMO2) cross-link. Positions 360–457 (GTNVYITRAQ…DMCTNARRVV (98 aa)) constitute a BEN domain. S492 and S496 each carry phosphoserine.

Homooligomer; mediated by the BTB domain. Interacts with HDAC3 and HDAC4. Interacts (via BTB domain) with CUL3, PSMD7 and RCOR1. As to expression, ubiquitously expressed with higher expression in the brain, kidney and liver, and at lower levels in heart, lung and testes.

The protein resides in the nucleus. It localises to the cytoplasm. Functionally, functions as a transcriptional repressor. Seems to function as a transcriptional corepressor in neuronal cells through recruitment of HDAC3 and HDAC4. Contributes to tumor progression, and tumor cell proliferation and survival. This may be mediated at least in part through repressing transcriptional activity of GADD45GIP1. Required for recruiting the proteasome from the nucleus to the cytoplasm and dendritic spines. Involved in the acute behavioral and neurological responses to cocaine and amphetamines. This Mus musculus (Mouse) protein is Nucleus accumbens-associated protein 1 (Nacc1).